The following is a 172-amino-acid chain: S-ribosylhomocysteine lyase (172 aa).

Fe cation contacts are provided by H54, H58, and C128.

The protein belongs to the LuxS family. Homodimer. Fe cation serves as cofactor.

The enzyme catalyses S-(5-deoxy-D-ribos-5-yl)-L-homocysteine = (S)-4,5-dihydroxypentane-2,3-dione + L-homocysteine. Functionally, involved in the synthesis of autoinducer 2 (AI-2) which is secreted by bacteria and is used to communicate both the cell density and the metabolic potential of the environment. The regulation of gene expression in response to changes in cell density is called quorum sensing. Catalyzes the transformation of S-ribosylhomocysteine (RHC) to homocysteine (HC) and 4,5-dihydroxy-2,3-pentadione (DPD). The sequence is that of S-ribosylhomocysteine lyase from Vibrio parahaemolyticus serotype O3:K6 (strain RIMD 2210633).